We begin with the raw amino-acid sequence, 596 residues long: Elongation factor 4 (596 aa).

Residues 2–184 (KHIRNFSIIA…VIVEQIPPPE (183 aa)) enclose the tr-type G domain. Residues 14 to 19 (DHGKST) and 131 to 134 (NKID) each bind GTP.

It belongs to the TRAFAC class translation factor GTPase superfamily. Classic translation factor GTPase family. LepA subfamily.

The protein resides in the cell inner membrane. The enzyme catalyses GTP + H2O = GDP + phosphate + H(+). In terms of biological role, required for accurate and efficient protein synthesis under certain stress conditions. May act as a fidelity factor of the translation reaction, by catalyzing a one-codon backward translocation of tRNAs on improperly translocated ribosomes. Back-translocation proceeds from a post-translocation (POST) complex to a pre-translocation (PRE) complex, thus giving elongation factor G a second chance to translocate the tRNAs correctly. Binds to ribosomes in a GTP-dependent manner. This chain is Elongation factor 4, found in Shewanella pealeana (strain ATCC 700345 / ANG-SQ1).